We begin with the raw amino-acid sequence, 244 residues long: Uridylate kinase (244 aa).

18–21 is a binding site for ATP; that stretch reads KISG. The segment at 26 to 31 is involved in allosteric activation by GTP; that stretch reads GDQGYG. Glycine 60 is a UMP binding site. The ATP site is built by glycine 61 and arginine 65. Residues aspartate 80 and 141-148 each bind UMP; that span reads TGNPYFTT. ATP-binding residues include threonine 168, tyrosine 174, and aspartate 177.

This sequence belongs to the UMP kinase family. In terms of assembly, homohexamer.

It is found in the cytoplasm. The enzyme catalyses UMP + ATP = UDP + ADP. It functions in the pathway pyrimidine metabolism; CTP biosynthesis via de novo pathway; UDP from UMP (UMPK route): step 1/1. With respect to regulation, allosterically activated by GTP. Inhibited by UTP. Catalyzes the reversible phosphorylation of UMP to UDP. The protein is Uridylate kinase of Paracoccus denitrificans (strain Pd 1222).